Consider the following 2450-residue polypeptide: Tetratricopeptide repeat protein 28 (2450 aa).

N-acetylmethionine is present on Met1. The segment at 1 to 36 (MEQPPPLAPEPASARSRRRREPESPPAPIPLFGART) is disordered. Ser24 carries the phosphoserine modification. TPR repeat units follow at residues 52–85 (FVEK…DPQN), 87–119 (ILYS…NPKW), 120–153 (PKAY…DPKS), 190–223 (FVVV…GTCS), 228–261 (GSVF…AKTL), 268–301 (CRAH…AMKL), 308–341 (SSAL…AKQS), 348–381 (AREL…AKDL), 388–421 (ARAY…AQEL), 428–461 (MRAY…AEDL), 468–501 (GRAS…AQEL), 508–541 (GRAY…SMEV), 548–581 (ASTH…AREL), 588–621 (ARAL…APDL), 628–661 (GKVC…AKDL), 668–701 (AKAY…AQSL), 708–741 (FRAL…SHHV), 748–781 (ASAY…YQEL), 788–821 (CRAH…GRKL), 828–861 (AQVY…LQQL), 871–904 (GRAY…AQSL), 911–944 (AKAY…AHEL), 951–984 (AQAY…ARDM), 991–1024 (SDAA…AEET), 1031–1064 (GRAY…AAQM), 1071–1104 (TVSY…AEQL), 1111–1144 (AKIR…FETI), and 1163–1196 (TSSY…AFAD). Positions 1362–1381 (SGTVSPSKDGTSSLPRRQNS) are disordered. Ser1584 and Ser2098 each carry phosphoserine. The tract at residues 2001 to 2364 (KPEGGLEGGG…GTLTSKRDVL (364 aa)) is disordered. A compositionally biased stretch (polar residues) spans 2090-2116 (SVSSKGSVSTPNSPVKMTLIPSPNSPF). The span at 2124–2140 (SSDTGESDQSSTETDST) shows a compositional bias: low complexity. Over residues 2143 to 2153 (SQEESTPKLDP) the composition is skewed to basic and acidic residues. Polar residues predominate over residues 2191 to 2206 (APSSTTVFRASETSAF). A Phosphoserine modification is found at Ser2216. A compositionally biased stretch (polar residues) spans 2229–2245 (ARSSSLPKVSSPATSEV). 2 stretches are compositionally biased toward low complexity: residues 2252-2262 (SPPGSSHPSPG) and 2296-2320 (SPAC…SPAD). Residues Ser2365 and Ser2370 each carry the phosphoserine modification.

In terms of assembly, interacts with AURKB. Expressed in embryos at all stages examined. In adult tissues, detected in heart and at low levels in kidney and testis.

The protein localises to the cytoplasm. The protein resides in the cytoskeleton. It is found in the microtubule organizing center. It localises to the centrosome. Its subcellular location is the spindle. The protein localises to the spindle pole. The protein resides in the midbody. During mitosis, may be involved in the condensation of spindle midzone microtubules, leading to the formation of midbody. In terms of biological role, essential for the formation and integrity of the midbody. Max play a critical role in the progress of mitosis and cytokinesis during cell cycle. The chain is Tetratricopeptide repeat protein 28 (Ttc28) from Mus musculus (Mouse).